We begin with the raw amino-acid sequence, 320 residues long: ATP-dependent 6-phosphofructokinase (320 aa).

Position 11 (Gly11) interacts with ATP. Position 21-25 (21-25 (RAVVR)) interacts with ADP. ATP contacts are provided by residues 72–73 (RC) and 102–105 (GDGS). Asp103 lines the Mg(2+) pocket. Position 125 to 127 (125 to 127 (TID)) interacts with substrate. Asp127 acts as the Proton acceptor in catalysis. Residue Arg154 participates in ADP binding. Substrate-binding positions include Arg162 and 169-171 (MGR). ADP is bound by residues 185–187 (GAE) and 214–216 (KTH). Residues Glu223, Arg244, and 250 to 253 (HIQR) contribute to the substrate site.

It belongs to the phosphofructokinase type A (PFKA) family. ATP-dependent PFK group I subfamily. Prokaryotic clade 'B1' sub-subfamily. As to quaternary structure, homotetramer. Mg(2+) is required as a cofactor.

It is found in the cytoplasm. The enzyme catalyses beta-D-fructose 6-phosphate + ATP = beta-D-fructose 1,6-bisphosphate + ADP + H(+). The protein operates within carbohydrate degradation; glycolysis; D-glyceraldehyde 3-phosphate and glycerone phosphate from D-glucose: step 3/4. Allosterically activated by ADP and other diphosphonucleosides, and allosterically inhibited by phosphoenolpyruvate. In terms of biological role, catalyzes the phosphorylation of D-fructose 6-phosphate to fructose 1,6-bisphosphate by ATP, the first committing step of glycolysis. The protein is ATP-dependent 6-phosphofructokinase of Clostridium botulinum (strain Alaska E43 / Type E3).